The primary structure comprises 83 residues: uncharacterized protein (83 aa).

Its subcellular location is the plastid. The protein resides in the chloroplast. This is an uncharacterized protein from Pinus thunbergii (Japanese black pine).